The primary structure comprises 408 residues: tRNA wybutosine-synthesizing protein 2 homolog (408 aa).

Residues Ser201, Lys208, Glu248, and 276–277 (DN) contribute to the S-adenosyl-L-methionine site.

The protein belongs to the class I-like SAM-binding methyltransferase superfamily. TRM5/TYW2 family.

It catalyses the reaction 4-demethylwyosine(37) in tRNA(Phe) + S-adenosyl-L-methionine = 4-demethyl-7-[(3S)-3-amino-3-carboxypropyl]wyosine(37) in tRNA(Phe) + S-methyl-5'-thioadenosine + H(+). It participates in tRNA modification; wybutosine-tRNA(Phe) biosynthesis. Its function is as follows. S-adenosyl-L-methionine-dependent transferase that acts as a component of the wybutosine biosynthesis pathway. Wybutosine is a hyper modified guanosine with a tricyclic base found at the 3'-position adjacent to the anticodon of eukaryotic phenylalanine tRNA. Catalyzes the transfer of the alpha-amino-alpha-carboxypropyl (acp) group from S-adenosyl-L-methionine to the C-7 position of 4-demethylwyosine (imG-14) to produce wybutosine-86. This is tRNA wybutosine-synthesizing protein 2 homolog (trmt12) from Danio rerio (Zebrafish).